The chain runs to 1620 residues: Probable serine/threonine-protein kinase gdt4 (1620 aa).

An N-terminal signal peptide occupies residues Met1–Ser19. Residues Asn20–Asn891 are Extracellular-facing. Residues Ile892–Gly912 traverse the membrane as a helical segment. The Cytoplasmic portion of the chain corresponds to Tyr913–Gln1620. Positions Ile1349–Leu1604 constitute a Protein kinase domain. Residues Leu1355 to Val1363 and Lys1376 contribute to the ATP site. The active-site Proton acceptor is the Asp1466.

It in the N-terminal section; belongs to the GDT family. The protein in the C-terminal section; belongs to the protein kinase superfamily. TKL Ser/Thr protein kinase family.

It is found in the membrane. It catalyses the reaction L-seryl-[protein] + ATP = O-phospho-L-seryl-[protein] + ADP + H(+). The catalysed reaction is L-threonyl-[protein] + ATP = O-phospho-L-threonyl-[protein] + ADP + H(+). This Dictyostelium discoideum (Social amoeba) protein is Probable serine/threonine-protein kinase gdt4 (gdt4).